The primary structure comprises 201 residues: Translation initiation factor IF-3 (201 aa).

Residues 167 to 201 are disordered; the sequence is PHRGAKTRARARHPGEPAGGPPPKPTAGDSKAAPN. Over residues 169 to 178 the composition is skewed to basic residues; the sequence is RGAKTRARAR.

It belongs to the IF-3 family. Monomer.

Its subcellular location is the cytoplasm. Its function is as follows. IF-3 binds to the 30S ribosomal subunit and shifts the equilibrium between 70S ribosomes and their 50S and 30S subunits in favor of the free subunits, thus enhancing the availability of 30S subunits on which protein synthesis initiation begins. This Mycobacterium bovis (strain ATCC BAA-935 / AF2122/97) protein is Translation initiation factor IF-3.